The chain runs to 456 residues: tRNA modification GTPase MnmE (456 aa).

R24, E81, and K120 together coordinate (6S)-5-formyl-5,6,7,8-tetrahydrofolate. One can recognise a TrmE-type G domain in the interval 216–379; it reads GMTVVIAGRP…LREHLKACMG (164 aa). N226 provides a ligand contact to K(+). Residues 226–231, 245–251, 270–273, 335–338, and 359–361 contribute to the GTP site; these read NAGKSS, TEIAGTT, DTAG, NKAD, and SAR. Mg(2+) is bound at residue S230. K(+) is bound by residues T245, I247, and T250. Position 251 (T251) interacts with Mg(2+). K456 is a (6S)-5-formyl-5,6,7,8-tetrahydrofolate binding site.

Belongs to the TRAFAC class TrmE-Era-EngA-EngB-Septin-like GTPase superfamily. TrmE GTPase family. In terms of assembly, homodimer. Heterotetramer of two MnmE and two MnmG subunits. K(+) is required as a cofactor.

The protein localises to the cytoplasm. Functionally, exhibits a very high intrinsic GTPase hydrolysis rate. Involved in the addition of a carboxymethylaminomethyl (cmnm) group at the wobble position (U34) of certain tRNAs, forming tRNA-cmnm(5)s(2)U34. The polypeptide is tRNA modification GTPase MnmE (Pseudomonas syringae pv. tomato (strain ATCC BAA-871 / DC3000)).